Reading from the N-terminus, the 221-residue chain is Ras-related protein RABA5a (221 aa).

Residue 21-28 (GDSAVGKS) participates in GTP binding. The short motif at 43–51 (SKSTIGVEF) is the Effector region element. Residues 69–73 (DTAGQ), 127–130 (NKSD), and 157–158 (SA) each bind GTP. S-geranylgeranyl cysteine attachment occurs at residues Cys-218 and Cys-219.

The protein belongs to the small GTPase superfamily. Rab family.

It is found in the cell membrane. Functionally, intracellular vesicle trafficking and protein transport. The chain is Ras-related protein RABA5a (RABA5A) from Arabidopsis thaliana (Mouse-ear cress).